A 175-amino-acid polypeptide reads, in one-letter code: Disulfide bond formation protein B (175 aa).

Residues 1 to 13 lie on the Cytoplasmic side of the membrane; the sequence is MSKLVTFSQQRSA. A helical transmembrane segment spans residues 14-30; that stretch reads WLILMFSALGLEASALY. Topologically, residues 31-48 are periplasmic; it reads FQYVMLLDPCVMCIYIRV. A disulfide bond links cysteine 40 and cysteine 43. The chain crosses the membrane as a helical span at residues 49-64; sequence AVLGLILAGLVGSIAP. Over 65–71 the chain is Cytoplasmic; the sequence is RFWIVRF. A helical transmembrane segment spans residues 72–89; sequence LGMSLWGVSSAWGAKLSF. Residues 90-144 are Periplasmic-facing; that stretch reads ELYQMQANPSPFSTCSFYPEFPTWMPLDAWMPSIFMPTGMCSDIPWTMMSLSMTQ. Cysteine 104 and cysteine 130 are joined by a disulfide. Residues 145 to 163 traverse the membrane as a helical segment; it reads WTLIAFVGYSIAFLLFIYP. At 164–175 the chain is on the cytoplasmic side; sequence GLLYKKPTNPYS.

The protein belongs to the DsbB family.

The protein resides in the cell inner membrane. Its function is as follows. Required for disulfide bond formation in some periplasmic proteins. Acts by oxidizing the DsbA protein. In Shewanella denitrificans (strain OS217 / ATCC BAA-1090 / DSM 15013), this protein is Disulfide bond formation protein B.